Reading from the N-terminus, the 72-residue chain is Cytochrome c oxidase subunit 8C, mitochondrial (72 aa).

Residues 1-29 (MSRLLQFCSSLLRHRVVLFSKPGHSGRLS) constitute a mitochondrion transit peptide. At 30-40 (HSESPQNQVLT) the chain is on the mitochondrial matrix side. A helical transmembrane segment spans residues 41 to 64 (PTESVVGIVVFFATFFIPAAYVMS). Residues 65–72 (NLKFFKGE) lie on the Mitochondrial intermembrane side of the membrane.

The protein belongs to the cytochrome c oxidase VIII family. As to quaternary structure, component of the cytochrome c oxidase (complex IV, CIV), a multisubunit enzyme composed of 14 subunits. The complex is composed of a catalytic core of 3 subunits MT-CO1, MT-CO2 and MT-CO3, encoded in the mitochondrial DNA, and 11 supernumerary subunits COX4I, COX5A, COX5B, COX6A, COX6B, COX6C, COX7A, COX7B, COX7C, COX8 and NDUFA4, which are encoded in the nuclear genome. The complex exists as a monomer or a dimer and forms supercomplexes (SCs) in the inner mitochondrial membrane with NADH-ubiquinone oxidoreductase (complex I, CI) and ubiquinol-cytochrome c oxidoreductase (cytochrome b-c1 complex, complex III, CIII), resulting in different assemblies (supercomplex SCI(1)III(2)IV(1) and megacomplex MCI(2)III(2)IV(2)).

The protein localises to the mitochondrion inner membrane. It functions in the pathway energy metabolism; oxidative phosphorylation. In terms of biological role, component of the cytochrome c oxidase, the last enzyme in the mitochondrial electron transport chain which drives oxidative phosphorylation. The respiratory chain contains 3 multisubunit complexes succinate dehydrogenase (complex II, CII), ubiquinol-cytochrome c oxidoreductase (cytochrome b-c1 complex, complex III, CIII) and cytochrome c oxidase (complex IV, CIV), that cooperate to transfer electrons derived from NADH and succinate to molecular oxygen, creating an electrochemical gradient over the inner membrane that drives transmembrane transport and the ATP synthase. Cytochrome c oxidase is the component of the respiratory chain that catalyzes the reduction of oxygen to water. Electrons originating from reduced cytochrome c in the intermembrane space (IMS) are transferred via the dinuclear copper A center (CU(A)) of subunit 2 and heme A of subunit 1 to the active site in subunit 1, a binuclear center (BNC) formed by heme A3 and copper B (CU(B)). The BNC reduces molecular oxygen to 2 water molecules using 4 electrons from cytochrome c in the IMS and 4 protons from the mitochondrial matrix. The sequence is that of Cytochrome c oxidase subunit 8C, mitochondrial (Cox8c) from Rattus norvegicus (Rat).